The following is an 883-amino-acid chain: Phosphoenolpyruvate carboxylase (883 aa).

Catalysis depends on residues H138 and K546.

This sequence belongs to the PEPCase type 1 family. Mg(2+) serves as cofactor.

It catalyses the reaction oxaloacetate + phosphate = phosphoenolpyruvate + hydrogencarbonate. In terms of biological role, forms oxaloacetate, a four-carbon dicarboxylic acid source for the tricarboxylic acid cycle. The sequence is that of Phosphoenolpyruvate carboxylase from Salmonella dublin (strain CT_02021853).